We begin with the raw amino-acid sequence, 553 residues long: Hydroxylamine reductase (553 aa).

Cysteine 3, cysteine 6, cysteine 18, and cysteine 25 together coordinate [2Fe-2S] cluster. Histidine 252, glutamate 276, cysteine 320, cysteine 408, cysteine 436, cysteine 461, glutamate 495, and lysine 497 together coordinate hybrid [4Fe-2O-2S] cluster. Position 408 is a cysteine persulfide (cysteine 408).

The protein belongs to the HCP family. Requires [2Fe-2S] cluster as cofactor. Hybrid [4Fe-2O-2S] cluster serves as cofactor.

Its subcellular location is the cytoplasm. The enzyme catalyses A + NH4(+) + H2O = hydroxylamine + AH2 + H(+). Catalyzes the reduction of hydroxylamine to form NH(3) and H(2)O. The sequence is that of Hydroxylamine reductase from Vibrio parahaemolyticus serotype O3:K6 (strain RIMD 2210633).